A 301-amino-acid polypeptide reads, in one-letter code: tRNA dimethylallyltransferase (301 aa).

ATP is bound at residue 12-19; the sequence is GPTAVGKT. 14–19 provides a ligand contact to substrate; that stretch reads TAVGKT. Residues 37 to 40 are interaction with substrate tRNA; it reads DSQQ.

Belongs to the IPP transferase family. In terms of assembly, monomer. Mg(2+) serves as cofactor.

It catalyses the reaction adenosine(37) in tRNA + dimethylallyl diphosphate = N(6)-dimethylallyladenosine(37) in tRNA + diphosphate. Catalyzes the transfer of a dimethylallyl group onto the adenine at position 37 in tRNAs that read codons beginning with uridine, leading to the formation of N6-(dimethylallyl)adenosine (i(6)A). The chain is tRNA dimethylallyltransferase from Streptococcus uberis (strain ATCC BAA-854 / 0140J).